The sequence spans 261 residues: Type III pantothenate kinase (261 aa).

Position 7 to 14 (7 to 14 (EQGNTNTM)) interacts with ATP. Residue 108 to 111 (GADR) coordinates substrate. D110 acts as the Proton acceptor in catalysis. Residue D130 coordinates K(+). T133 is an ATP binding site. A substrate-binding site is contributed by T187.

Belongs to the type III pantothenate kinase family. As to quaternary structure, homodimer. The cofactor is NH4(+). K(+) is required as a cofactor.

It is found in the cytoplasm. It carries out the reaction (R)-pantothenate + ATP = (R)-4'-phosphopantothenate + ADP + H(+). It participates in cofactor biosynthesis; coenzyme A biosynthesis; CoA from (R)-pantothenate: step 1/5. In terms of biological role, catalyzes the phosphorylation of pantothenate (Pan), the first step in CoA biosynthesis. The polypeptide is Type III pantothenate kinase (Caulobacter vibrioides (strain ATCC 19089 / CIP 103742 / CB 15) (Caulobacter crescentus)).